Reading from the N-terminus, the 138-residue chain is ATP synthase epsilon chain (138 aa).

Belongs to the ATPase epsilon chain family. As to quaternary structure, F-type ATPases have 2 components, CF(1) - the catalytic core - and CF(0) - the membrane proton channel. CF(1) has five subunits: alpha(3), beta(3), gamma(1), delta(1), epsilon(1). CF(0) has three main subunits: a, b and c.

The protein localises to the cell membrane. Produces ATP from ADP in the presence of a proton gradient across the membrane. The protein is ATP synthase epsilon chain of Streptococcus equi subsp. zooepidemicus (strain H70).